A 474-amino-acid polypeptide reads, in one-letter code: Siroheme synthase (474 aa).

The tract at residues 1 to 203 (MKLFPLFADL…QRPEEAERLL (203 aa)) is precorrin-2 dehydrogenase /sirohydrochlorin ferrochelatase. NAD(+) contacts are provided by residues 22–23 (EI) and 43–44 (PA). Ser-128 carries the phosphoserine modification. Residues 216 to 474 (GSVVLVGAGP…QRPAPAALAA (259 aa)) are uroporphyrinogen-III C-methyltransferase. S-adenosyl-L-methionine is bound at residue Pro-225. Catalysis depends on Asp-248, which acts as the Proton acceptor. Lys-270 (proton donor) is an active-site residue. Residues 302–304 (GGD), Ile-307, 332–333 (TA), Met-384, and Gly-413 each bind S-adenosyl-L-methionine.

This sequence in the N-terminal section; belongs to the precorrin-2 dehydrogenase / sirohydrochlorin ferrochelatase family. In the C-terminal section; belongs to the precorrin methyltransferase family.

It carries out the reaction uroporphyrinogen III + 2 S-adenosyl-L-methionine = precorrin-2 + 2 S-adenosyl-L-homocysteine + H(+). It catalyses the reaction precorrin-2 + NAD(+) = sirohydrochlorin + NADH + 2 H(+). The catalysed reaction is siroheme + 2 H(+) = sirohydrochlorin + Fe(2+). The protein operates within cofactor biosynthesis; adenosylcobalamin biosynthesis; precorrin-2 from uroporphyrinogen III: step 1/1. It participates in cofactor biosynthesis; adenosylcobalamin biosynthesis; sirohydrochlorin from precorrin-2: step 1/1. It functions in the pathway porphyrin-containing compound metabolism; siroheme biosynthesis; precorrin-2 from uroporphyrinogen III: step 1/1. Its pathway is porphyrin-containing compound metabolism; siroheme biosynthesis; siroheme from sirohydrochlorin: step 1/1. The protein operates within porphyrin-containing compound metabolism; siroheme biosynthesis; sirohydrochlorin from precorrin-2: step 1/1. Multifunctional enzyme that catalyzes the SAM-dependent methylations of uroporphyrinogen III at position C-2 and C-7 to form precorrin-2 via precorrin-1. Then it catalyzes the NAD-dependent ring dehydrogenation of precorrin-2 to yield sirohydrochlorin. Finally, it catalyzes the ferrochelation of sirohydrochlorin to yield siroheme. In Bordetella petrii (strain ATCC BAA-461 / DSM 12804 / CCUG 43448), this protein is Siroheme synthase.